The chain runs to 156 residues: Small ribosomal subunit protein uS7 (156 aa).

It belongs to the universal ribosomal protein uS7 family. In terms of assembly, part of the 30S ribosomal subunit. Contacts proteins S9 and S11.

Its function is as follows. One of the primary rRNA binding proteins, it binds directly to 16S rRNA where it nucleates assembly of the head domain of the 30S subunit. Is located at the subunit interface close to the decoding center, probably blocks exit of the E-site tRNA. In Aromatoleum aromaticum (strain DSM 19018 / LMG 30748 / EbN1) (Azoarcus sp. (strain EbN1)), this protein is Small ribosomal subunit protein uS7.